The chain runs to 297 residues: uncharacterized protein (297 aa).

Positions 1–12 are enriched in polar residues; the sequence is MASYSFQFSTDA. Residues 1–21 form a disordered region; sequence MASYSFQFSTDATGKPGAAKP.

The protein to B.subtilis XkdY/XepA.

This is an uncharacterized protein from Bacillus subtilis (strain 168).